The primary structure comprises 527 residues: Glucose-6-phosphate isomerase (527 aa).

Catalysis depends on E323, which acts as the Proton donor. Active-site residues include H352 and K454.

It belongs to the GPI family.

It is found in the cytoplasm. The catalysed reaction is alpha-D-glucose 6-phosphate = beta-D-fructose 6-phosphate. The protein operates within carbohydrate biosynthesis; gluconeogenesis. It functions in the pathway carbohydrate degradation; glycolysis; D-glyceraldehyde 3-phosphate and glycerone phosphate from D-glucose: step 2/4. Functionally, catalyzes the reversible isomerization of glucose-6-phosphate to fructose-6-phosphate. In Prochlorococcus marinus (strain MIT 9515), this protein is Glucose-6-phosphate isomerase.